The chain runs to 227 residues: Cytochrome c oxidase subunit 2 (227 aa).

The Mitochondrial intermembrane portion of the chain corresponds to 1-14 (MAYPVQLGFQDAAS). A helical membrane pass occupies residues 15–45 (PIMEELLYFHDHTLMIMFLISSLVLYIISLM). The Mitochondrial matrix portion of the chain corresponds to 46–59 (LTTELMHTNTMDAQ). A helical transmembrane segment spans residues 60 to 87 (EVETVWTILPAAILILIALPSLRILYMM). Residues 88 to 227 (DEITTPSLTL…HFEEWLLSML (140 aa)) lie on the Mitochondrial intermembrane side of the membrane. Cu cation contacts are provided by His161, Cys196, Glu198, Cys200, His204, and Met207. Residue Glu198 participates in Mg(2+) binding.

It belongs to the cytochrome c oxidase subunit 2 family. Component of the cytochrome c oxidase (complex IV, CIV), a multisubunit enzyme composed of 14 subunits. The complex is composed of a catalytic core of 3 subunits MT-CO1, MT-CO2 and MT-CO3, encoded in the mitochondrial DNA, and 11 supernumerary subunits COX4I, COX5A, COX5B, COX6A, COX6B, COX6C, COX7A, COX7B, COX7C, COX8 and NDUFA4, which are encoded in the nuclear genome. The complex exists as a monomer or a dimer and forms supercomplexes (SCs) in the inner mitochondrial membrane with NADH-ubiquinone oxidoreductase (complex I, CI) and ubiquinol-cytochrome c oxidoreductase (cytochrome b-c1 complex, complex III, CIII), resulting in different assemblies (supercomplex SCI(1)III(2)IV(1) and megacomplex MCI(2)III(2)IV(2)). Found in a complex with TMEM177, COA6, COX18, COX20, SCO1 and SCO2. Interacts with TMEM177 in a COX20-dependent manner. Interacts with COX20. Interacts with COX16. Cu cation is required as a cofactor.

Its subcellular location is the mitochondrion inner membrane. The enzyme catalyses 4 Fe(II)-[cytochrome c] + O2 + 8 H(+)(in) = 4 Fe(III)-[cytochrome c] + 2 H2O + 4 H(+)(out). Component of the cytochrome c oxidase, the last enzyme in the mitochondrial electron transport chain which drives oxidative phosphorylation. The respiratory chain contains 3 multisubunit complexes succinate dehydrogenase (complex II, CII), ubiquinol-cytochrome c oxidoreductase (cytochrome b-c1 complex, complex III, CIII) and cytochrome c oxidase (complex IV, CIV), that cooperate to transfer electrons derived from NADH and succinate to molecular oxygen, creating an electrochemical gradient over the inner membrane that drives transmembrane transport and the ATP synthase. Cytochrome c oxidase is the component of the respiratory chain that catalyzes the reduction of oxygen to water. Electrons originating from reduced cytochrome c in the intermembrane space (IMS) are transferred via the dinuclear copper A center (CU(A)) of subunit 2 and heme A of subunit 1 to the active site in subunit 1, a binuclear center (BNC) formed by heme A3 and copper B (CU(B)). The BNC reduces molecular oxygen to 2 water molecules using 4 electrons from cytochrome c in the IMS and 4 protons from the mitochondrial matrix. This Lemur catta (Ring-tailed lemur) protein is Cytochrome c oxidase subunit 2 (MT-CO2).